Reading from the N-terminus, the 233-residue chain is Segregation and condensation protein A (233 aa).

Belongs to the ScpA family. As to quaternary structure, component of a cohesin-like complex composed of ScpA, ScpB and the Smc homodimer, in which ScpA and ScpB bind to the head domain of Smc. The presence of the three proteins is required for the association of the complex with DNA.

The protein resides in the cytoplasm. Participates in chromosomal partition during cell division. May act via the formation of a condensin-like complex containing Smc and ScpB that pull DNA away from mid-cell into both cell halves. The protein is Segregation and condensation protein A of Streptococcus pyogenes serotype M1.